Here is a 417-residue protein sequence, read N- to C-terminus: Indole-3-pyruvate monooxygenase YUCCA6 (417 aa).

36–41 is an FAD binding site; the sequence is GAGPSG. 204–209 is a binding site for NADP(+); it reads GCGNSG.

The protein belongs to the FMO family. The cofactor is FAD. Highly expressed in roots but modestly expressed in the cauline leaves and flowers. Expressed in anthers.

The protein localises to the cytoplasm. It carries out the reaction indole-3-pyruvate + NADPH + O2 + H(+) = (indol-3-yl)acetate + CO2 + NADP(+) + H2O. It participates in plant hormone metabolism; auxin biosynthesis. In terms of biological role, involved in auxin biosynthesis via the indole-3-pyruvic acid (IPA) pathway. Also able to convert in vitro phenyl pyruvate (PPA) to phenyl acetic acid (PAA). Required for the formation of floral organs and vascular tissues. Belongs to the set of redundant YUCCA genes probably responsible for auxin biosynthesis in shoots. The protein is Indole-3-pyruvate monooxygenase YUCCA6 (YUC6) of Arabidopsis thaliana (Mouse-ear cress).